The chain runs to 295 residues: bZIP transcription factor 60 (295 aa).

The segment at 101–154 (PAAADDSGKENSDLVVEKKSNDSGSEIHDDDDEEGDDDAVAKKRRRRVRNRDAA) is disordered. Residues 106–127 (DSGKENSDLVVEKKSNDSGSEI) are compositionally biased toward basic and acidic residues. Acidic residues predominate over residues 128 to 138 (HDDDDEEGDDD). Residues 140–203 (VAKKRRRRVR…QSLRYCLQKG (64 aa)) enclose the bZIP domain. The segment at 142 to 162 (KKRRRRVRNRDAAVRSRERKK) is basic motif. Residues 168–182 (LEKKSKYLERECLRL) are leucine-zipper. A helical transmembrane segment spans residues 224-244 (LLLGSLLWLLGVNFICLFPYM).

The protein belongs to the bZIP family. Interacts with BZIP28. Expressed in seedlings, rosette and cauline leaves, stems, buds, flowers, siliques, immature seeds, anthers and pollen grains.

It is found in the endoplasmic reticulum membrane. The protein resides in the nucleus. In terms of biological role, transcription factor involved in the unfolded protein response (UPR). Acts during endoplasmic reticulum stress (ER) by activating unfolded protein response (UPR) target genes via direct binding to the UPR element (UPRE). Plays a role in plant immunity and abiotic stress responses. This chain is bZIP transcription factor 60, found in Arabidopsis thaliana (Mouse-ear cress).